The following is a 154-amino-acid chain: MAARMCCQLDPARDVLCLRPVGAESRGRPLPGPLGALPPSSASAVPADHGSHLSLRGLPVCSFSSAGPCALRFTSARRMETTVNAPWSLPTVLHKRTIGLSGRSMTWIEEYIKDCVFKDWEELGEEIRLKVFVLGGCRHKLVCSPAPCNFFTSA.

Residues 68-117 are mitochondrial targeting sequence; the sequence is PCALRFTSARRMETTVNAPWSLPTVLHKRTIGLSGRSMTWIEEYIKDCVF.

This sequence belongs to the orthohepadnavirus protein X family. In terms of assembly, may form homodimer. May interact with host CEBPA, CFLAR, CREB1, DDB1, E4F1, HBXIP, HSPD1/HSP60, NFKBIA, POLR2E and SMAD4. Interacts with host SMC5-SMC6 complex and induces its degradation. Interacts with host TRPC4AP; leading to prevent ubiquitination of TRPC4AP. Interacts with host PLSCR1; this interaction promotes ubiquitination and degradation of HBx and impairs HBx-mediated cell proliferation. A fraction may be phosphorylated in insect cells and HepG2 cells, a human hepatoblastoma cell line. Phosphorylated in vitro by host protein kinase C or mitogen-activated protein kinase. N-acetylated in insect cells.

The protein localises to the host cytoplasm. The protein resides in the host nucleus. It localises to the host mitochondrion. Functionally, multifunctional protein that plays a role in silencing host antiviral defenses and promoting viral transcription. Does not seem to be essential for HBV infection. May be directly involved in development of cirrhosis and liver cancer (hepatocellular carcinoma). Most of cytosolic activities involve modulation of cytosolic calcium. The effect on apoptosis is controversial depending on the cell types in which the studies have been conducted. May induce apoptosis by localizing in mitochondria and causing loss of mitochondrial membrane potential. May also modulate apoptosis by binding host CFLAR, a key regulator of the death-inducing signaling complex (DISC). Promotes viral transcription by using the host E3 ubiquitin ligase DDB1 to target the SMC5-SMC6 complex to proteasomal degradation. This host complex would otherwise bind to viral episomal DNA, and prevents its transcription. Moderately stimulates transcription of many different viral and cellular transcription elements. Promoters and enhancers stimulated by HBx contain DNA binding sites for NF-kappa-B, AP-1, AP-2, c-EBP, ATF/CREB, or the calcium-activated factor NF-AT. The sequence is that of Protein X from Homo sapiens (Human).